A 700-amino-acid polypeptide reads, in one-letter code: Calpain-2 catalytic subunit (700 aa).

An N-acetylalanine modification is found at Ala2. Positions Ala2–Gly19 are cleaved as a propeptide — anchors to the small subunit. The Calpain catalytic domain occupies Leu45–Thr344. Ca(2+) is bound by residues Gly91 and Asp96. Cys105 is a catalytic residue. Positions 175, 229, and 230 each coordinate Ca(2+). Catalysis depends on residues His262 and Asn286. Glu292, Asp299, and Glu323 together coordinate Ca(2+). A domain III region spans residues Pro345 to Asp514. The segment at Glu515–Asp529 is linker. The interval Ile530–Leu700 is domain IV. Ala542, Asp545, Glu547, Glu552, Asp585, Asp587, Ser589, Lys591, Glu596, Asp615, Asp617, Ser619, Thr621, Glu626, Asp658, and Asn661 together coordinate Ca(2+). EF-hand domains are found at residues Phe572–Phe597, Thr602–Lys637, and Asp652–Leu672.

Belongs to the peptidase C2 family. In terms of assembly, forms a heterodimer with a small (regulatory) subunit (CAPNS1). Interacts with CPEB3; this leads to cleavage of CPEB3. Requires Ca(2+) as cofactor. Ubiquitous.

It is found in the cytoplasm. Its subcellular location is the cell membrane. It carries out the reaction Broad endopeptidase specificity.. Activated by 200-1000 micromolar concentrations of calcium and inhibited by calpastatin. Functionally, calcium-regulated non-lysosomal thiol-protease which catalyzes limited proteolysis of substrates involved in cytoskeletal remodeling and signal transduction. Proteolytically cleaves MYOC at 'Arg-226'. Proteolytically cleaves CPEB3 following neuronal stimulation which abolishes CPEB3 translational repressor activity, leading to translation of CPEB3 target mRNAs. This is Calpain-2 catalytic subunit (CAPN2) from Bos taurus (Bovine).